Consider the following 104-residue polypeptide: uncharacterized protein (104 aa).

Residues 58–71 (PERDRARRDRDHHP) are compositionally biased toward basic and acidic residues. Positions 58-84 (PERDRARRDRDHHPWSRSRSQLSPRMA) are disordered.

This is an uncharacterized protein from Mycobacterium tuberculosis (strain ATCC 25618 / H37Rv).